A 590-amino-acid chain; its full sequence is Aspartate--tRNA(Asp/Asn) ligase (590 aa).

Glu-173 is an L-aspartate binding site. Residues 197 to 200 (QIFK) are aspartate. Position 219 (Arg-219) interacts with L-aspartate. Residues 219 to 221 (RDE) and Gln-228 each bind ATP. His-450 is an L-aspartate binding site. Glu-484 provides a ligand contact to ATP. Residue Arg-491 participates in L-aspartate binding. 536 to 539 (GLDR) serves as a coordination point for ATP.

Belongs to the class-II aminoacyl-tRNA synthetase family. Type 1 subfamily. Homodimer.

Its subcellular location is the cytoplasm. The catalysed reaction is tRNA(Asx) + L-aspartate + ATP = L-aspartyl-tRNA(Asx) + AMP + diphosphate. Its function is as follows. Aspartyl-tRNA synthetase with relaxed tRNA specificity since it is able to aspartylate not only its cognate tRNA(Asp) but also tRNA(Asn). Reaction proceeds in two steps: L-aspartate is first activated by ATP to form Asp-AMP and then transferred to the acceptor end of tRNA(Asp/Asn). This Coxiella burnetii (strain RSA 493 / Nine Mile phase I) protein is Aspartate--tRNA(Asp/Asn) ligase.